Consider the following 190-residue polypeptide: CASP-like protein 2U1 (190 aa).

Residues 1 to 16 (MAFTSLLGSDAERKVA) are Cytoplasmic-facing. The chain crosses the membrane as a helical span at residues 17-37 (VAEVALRAVLCGLGALAAALV). Topologically, residues 38–59 (ATDTQTRTFFSLQKKATYTDMK) are extracellular. A helical membrane pass occupies residues 60 to 80 (AMVLLVAAAAAAAGYSLLQAA). Residues 81–100 (RCCCCVALLRTSIRPRARLL) are Cytoplasmic-facing. The chain crosses the membrane as a helical span at residues 101 to 121 (LAWCVFACDQALAYALLAAVV). The Extracellular segment spans residues 122–152 (AALQASVVAKQGLPQLQWMAICALYGAFCRQ). A helical membrane pass occupies residues 153-173 (AGAGVACAVAAAVDAALLAFL). Residues 174 to 190 (SAFNLFRLYGAKATTTT) are Cytoplasmic-facing.

This sequence belongs to the Casparian strip membrane proteins (CASP) family. Homodimer and heterodimers.

The protein localises to the cell membrane. This chain is CASP-like protein 2U1, found in Zea mays (Maize).